The sequence spans 345 residues: Platelet-derived growth factor C (345 aa).

The signal sequence occupies residues 1-22; that stretch reads MLLLGLLLLTSALAGQRTGTRA. The segment covering 24–33 has biased composition (polar residues); that stretch reads SNLSSKLQLS. The disordered stretch occupies residues 24-45; the sequence is SNLSSKLQLSSDKEQNGVQDPR. Residue Asn25 is glycosylated (N-linked (GlcNAc...) asparagine). Residues 34-45 are compositionally biased toward basic and acidic residues; it reads SDKEQNGVQDPR. One can recognise a CUB domain in the interval 46–163; it reads HERVVTISGN…PGFCIHYSII (118 aa). The N-linked (GlcNAc...) asparagine glycan is linked to Asn55. 4 disulfides stabilise this stretch: Cys104/Cys124, Cys250/Cys294, Cys280/Cys335, and Cys287/Cys337.

Belongs to the PDGF/VEGF growth factor family. Homodimer; disulfide-linked. Interacts with PDGFRA homodimers, and with heterodimers formed by PDGFRA and PDGFRB. Interacts (via CUB domain) with PLAT (via kringle domain). In terms of processing, proteolytic removal of the N-terminal CUB domain releasing the core domain is necessary for unmasking the receptor-binding epitopes of the core domain. Cleavage after basic residues in the hinge region (region connecting the CUB and growth factor domains) gives rise to the receptor-binding form. Cleaved by PLAT and PLG. Post-translationally, sumoylated with SUMO1. N-glycosylated. In terms of tissue distribution, highly expressed in the kidney and adrenal gland. In the kidney, it is expressed in arteriolar smooth muscle cells and in epithelial cells of individual segments (at protein level).

The protein localises to the cytoplasm. Its subcellular location is the cytosol. The protein resides in the secreted. It localises to the nucleus. It is found in the cytoplasmic granule. The protein localises to the cell membrane. Growth factor that plays an essential role in the regulation of embryonic development, cell proliferation, cell migration, survival and chemotaxis. Potent mitogen and chemoattractant for cells of mesenchymal origin. Required for normal skeleton formation during embryonic development, especially for normal development of the craniofacial skeleton and for normal development of the palate. Required for normal skin morphogenesis during embryonic development. Plays an important role in wound healing, where it appears to be involved in three stages: inflammation, proliferation and remodeling. Plays an important role in angiogenesis and blood vessel development. Involved in fibrotic processes, in which transformation of interstitial fibroblasts into myofibroblasts plus collagen deposition occurs. The CUB domain has mitogenic activity in coronary artery smooth muscle cells, suggesting a role beyond the maintenance of the latency of the PDGF domain. In the nucleus, PDGFC seems to have additional function. In Rattus norvegicus (Rat), this protein is Platelet-derived growth factor C (Pdgfc).